The following is a 499-amino-acid chain: GTPase Der (499 aa).

2 EngA-type G domains span residues proline 3–valine 166 and isoleucine 211–threonine 384. GTP-binding positions include glycine 9–serine 16, aspartate 56–isoleucine 60, asparagine 118–aspartate 121, glycine 217–serine 224, aspartate 264–valine 268, and asparagine 329–aspartate 332. Residues arginine 385–aspartate 469 form the KH-like domain.

The protein belongs to the TRAFAC class TrmE-Era-EngA-EngB-Septin-like GTPase superfamily. EngA (Der) GTPase family. Associates with the 50S ribosomal subunit.

Its function is as follows. GTPase that plays an essential role in the late steps of ribosome biogenesis. This chain is GTPase Der, found in Erwinia tasmaniensis (strain DSM 17950 / CFBP 7177 / CIP 109463 / NCPPB 4357 / Et1/99).